Consider the following 245-residue polypeptide: MKLTQFISYAILSLSGVQAATLNGPCTGARGAPGICISTSSCTKAGGSYISNACPGLPIGIKCCSKTSCGDGGNCRFTSACSSGNTQAGLCPGPSSFQCCLPKASGGGKFPPPKIPAVGRCKKTAVDGAKKIVAAHPGMVREIFCIRDCPCPSNSEHCCGLATDMMCTSEAGEYSKLTWHGIVKKRDRDAFGRVMAEWVMNHRKILNLKYVIWGQRIWNPSLDKVSPWTNWRQMEDRGSITQNHW.

The N-terminal stretch at 1-19 is a signal peptide; it reads MKLTQFISYAILSLSGVQA.

It localises to the secreted. This is an uncharacterized protein from Arthroderma benhamiae (strain ATCC MYA-4681 / CBS 112371) (Trichophyton mentagrophytes).